The primary structure comprises 261 residues: Protein phosphatase inhibitor 2 (261 aa).

Residues 1–16 (MNKDEEFLEEHHYKDD) show a composition bias toward basic and acidic residues. The segment at 1 to 150 (MNKDEEFLEE…TPYHYYESEE (150 aa)) is required for binding to pppB. The tract at residues 1-261 (MNKDEEFLEE…LNANLSDDEQ (261 aa)) is disordered. The segment covering 17–60 (DAIEGEEEQGEEEESDLDDDMYNIDGETNDDDDDDEAEDEESSE) has biased composition (acidic residues). Over residues 123–134 (LTINDMNKSSTM) the composition is skewed to polar residues. A coiled-coil region spans residues 150–242 (EETDESKKYL…KKFDNLRKAH (93 aa)). Basic and acidic residues predominate over residues 154 to 163 (ESKKYLENKF). Basic residues predominate over residues 195 to 206 (DKKKKKKNLKIH). The span at 212–225 (DDNDDNEDEDEDET) shows a compositional bias: acidic residues. Over residues 226-250 (EEKKENKKKFDNLRKAHYNEFKVVR) the composition is skewed to basic and acidic residues.

It belongs to the protein phosphatase inhibitor 2 family. Interacts with pppB.

Functionally, inhibitor of protein-phosphatase 1 (PP1). In Dictyostelium discoideum (Social amoeba), this protein is Protein phosphatase inhibitor 2 (dpiA).